The following is a 150-amino-acid chain: Seminal ribonuclease (150 aa).

A signal peptide spans 1 to 26; it reads MALKSLVVLPLLVLVLLLVRVQPSLG. Substrate contacts are provided by lysine 33 and arginine 36. Histidine 38 acts as the Proton acceptor in catalysis. 4 disulfides stabilise this stretch: cysteine 52–cysteine 110, cysteine 66–cysteine 121, cysteine 84–cysteine 136, and cysteine 91–cysteine 98. Residues 67-71 and lysine 92 each bind substrate; that span reads KPVNT. At asparagine 93 the chain carries Deamidated asparagine; by deterioration. Arginine 111 contacts substrate. Residue histidine 145 is the Proton donor of the active site.

It belongs to the pancreatic ribonuclease family. In terms of assembly, homodimer; disulfide-linked. As to expression, seminal plasma. Can reach 3% of the protein content of this fluid.

Its subcellular location is the secreted. The catalysed reaction is an [RNA] containing cytidine + H2O = an [RNA]-3'-cytidine-3'-phosphate + a 5'-hydroxy-ribonucleotide-3'-[RNA].. It catalyses the reaction an [RNA] containing uridine + H2O = an [RNA]-3'-uridine-3'-phosphate + a 5'-hydroxy-ribonucleotide-3'-[RNA].. Allosteric regulation by both substrate and reaction products. Its function is as follows. This enzyme hydrolyzes both single- and double-stranded RNA. This Bos taurus (Bovine) protein is Seminal ribonuclease (SRN).